The sequence spans 203 residues: 8-oxoguanine DNA glycosylase/AP lyase (203 aa).

Active-site residues include Lys128 and Asp146.

The protein belongs to the type-2 OGG1 family.

It carries out the reaction 2'-deoxyribonucleotide-(2'-deoxyribose 5'-phosphate)-2'-deoxyribonucleotide-DNA = a 3'-end 2'-deoxyribonucleotide-(2,3-dehydro-2,3-deoxyribose 5'-phosphate)-DNA + a 5'-end 5'-phospho-2'-deoxyribonucleoside-DNA + H(+). Catalyzes the excision of an oxidatively damaged form of guanine (7,8-dihydro-8-oxoguanine = 8-oxoG) from DNA. Also cleaves the DNA backbone at apurinic/apyrimidinic sites (AP sites). The chain is 8-oxoguanine DNA glycosylase/AP lyase from Sulfolobus acidocaldarius (strain ATCC 33909 / DSM 639 / JCM 8929 / NBRC 15157 / NCIMB 11770).